The following is a 353-amino-acid chain: Photosystem II D2 protein (353 aa).

The residue at position 2 (Thr-2) is an N-acetylthreonine. Position 2 is a phosphothreonine (Thr-2). The chain crosses the membrane as a helical span at residues 41 to 61 (CAYFALGGWFTGTTFVTSWYT). His-118 serves as a coordination point for chlorophyll a. A helical membrane pass occupies residues 125–141 (GFMLRQFELARSVQLRP). Residues Gln-130 and Asn-143 each contribute to the pheophytin a site. A helical membrane pass occupies residues 153 to 166 (VFVSVFLIYPLGQS). His-198 contributes to the chlorophyll a binding site. The chain crosses the membrane as a helical span at residues 208–228 (AALLCAIHGATVENLYFEDGD). Residues His-215 and Phe-262 each coordinate a plastoquinone. His-215 contacts Fe cation. His-269 provides a ligand contact to Fe cation. The helical transmembrane segment at 279-295 (GLWMSALGVVGLALNLR) threads the bilayer.

Belongs to the reaction center PufL/M/PsbA/D family. In terms of assembly, PSII is composed of 1 copy each of membrane proteins PsbA, PsbB, PsbC, PsbD, PsbE, PsbF, PsbH, PsbI, PsbJ, PsbK, PsbL, PsbM, PsbT, PsbX, PsbY, PsbZ, Psb30/Ycf12, at least 3 peripheral proteins of the oxygen-evolving complex and a large number of cofactors. It forms dimeric complexes. It depends on The D1/D2 heterodimer binds P680, chlorophylls that are the primary electron donor of PSII, and subsequent electron acceptors. It shares a non-heme iron and each subunit binds pheophytin, quinone, additional chlorophylls, carotenoids and lipids. There is also a Cl(-1) ion associated with D1 and D2, which is required for oxygen evolution. The PSII complex binds additional chlorophylls, carotenoids and specific lipids. as a cofactor.

It is found in the plastid. It localises to the chloroplast thylakoid membrane. The catalysed reaction is 2 a plastoquinone + 4 hnu + 2 H2O = 2 a plastoquinol + O2. In terms of biological role, photosystem II (PSII) is a light-driven water:plastoquinone oxidoreductase that uses light energy to abstract electrons from H(2)O, generating O(2) and a proton gradient subsequently used for ATP formation. It consists of a core antenna complex that captures photons, and an electron transfer chain that converts photonic excitation into a charge separation. The D1/D2 (PsbA/PsbD) reaction center heterodimer binds P680, the primary electron donor of PSII as well as several subsequent electron acceptors. D2 is needed for assembly of a stable PSII complex. This Panax ginseng (Korean ginseng) protein is Photosystem II D2 protein.